The sequence spans 310 residues: Protein-L-isoaspartate O-methyltransferase (310 aa).

2 disordered regions span residues 1-44 and 67-88; these read MSGE…DKPA and AKPATAPKPTAPKPALPKPAAP. A compositionally biased stretch (basic and acidic residues) spans 14 to 29; the sequence is EDLKRAPRKSEGRPGE. Residues 32-44 are compositionally biased toward low complexity; the sequence is AAGAVPKAADKPA. Positions 75–86 are enriched in pro residues; that stretch reads PTAPKPALPKPA. The active site involves Ser-157.

The protein belongs to the methyltransferase superfamily. L-isoaspartyl/D-aspartyl protein methyltransferase family.

It localises to the cytoplasm. It catalyses the reaction [protein]-L-isoaspartate + S-adenosyl-L-methionine = [protein]-L-isoaspartate alpha-methyl ester + S-adenosyl-L-homocysteine. Functionally, catalyzes the methyl esterification of L-isoaspartyl residues in peptides and proteins that result from spontaneous decomposition of normal L-aspartyl and L-asparaginyl residues. It plays a role in the repair and/or degradation of damaged proteins. The chain is Protein-L-isoaspartate O-methyltransferase from Burkholderia orbicola (strain MC0-3).